A 519-amino-acid chain; its full sequence is Putative cysteine ligase BshC (519 aa).

Coiled-coil stretches lie at residues 51-71 and 440-464; these read LNALVDELMRQNPRLNDSLKE and TKLNKQLQLAVETIVDQKRRLHEQA.

Belongs to the BshC family.

Involved in bacillithiol (BSH) biosynthesis. May catalyze the last step of the pathway, the addition of cysteine to glucosamine malate (GlcN-Mal) to generate BSH. In Exiguobacterium sibiricum (strain DSM 17290 / CCUG 55495 / CIP 109462 / JCM 13490 / 255-15), this protein is Putative cysteine ligase BshC.